We begin with the raw amino-acid sequence, 727 residues long: MNQKLLKLENLLRFHTIYRQLHSLCQRRALRQWRHGFSSAYPVWTAQLCAWPWPTDVLTGAALSQYRLLVTKKEEGPWKSQLSSTKSKKVVEVWIGMTIEELARAMEKNTDYVYEALLNTDIDIDSLEADSHLDEVWIKEVITKAGMKLKWSKLKQDKVRKNKDAVRRPQADPALLTPRSPVVTIMGHVDHGKTTLLDKFRKTQVAAVETGGITQHIGAFLVSLPSGEKITFLDTPGHAAFSAMRARGAQVTDIVVLVVAADDGVMKQTVESIQHAKDAQVPIILAVNKCDKAEADPEKVKKELLAYDVVCEDYGGDVQAVPVSALTGDNLMALAEATVALAEMLELKADPNGPVEGTVIESFTDKGRGLVTTAIIQRGTLRKGSVLVAGKCWAKVRLMFDENGKTIDEAYPSMPVGITGWRDLPSAGEEILEVESEPRAREVVDWRKYEQEQEKGQEDLKIIEEKRKEHKEAHQKAREKYGHLLWKKRSILRFLERKEQIPLKPKEKRERDSNVLSVIIKGDVDGSVEAILNIIDTYDASHECELELVHFGVGDVSANDVNLAETFDGVIYGFNVNAGNVIQQSAAKKGVKIKLHKIIYRLVEDLQEELSSRLPCAVEEHPVGEASILATFSVTEGKKKVPVAGCRVQKGQLEKQKKFKLTRNGHVIWKGSLTSLKHHKDDISIVKTGMDCGLSLDEDNMEFQVGDRIVCYEEKQIQAKTSWDPGF.

Residues 1-29 (MNQKLLKLENLLRFHTIYRQLHSLCQRRA) constitute a mitochondrion transit peptide. Residues 178–348 (PRSPVVTIMG…VALAEMLELK (171 aa)) form the tr-type G domain. The segment at 187-194 (GHVDHGKT) is G1. Residue 187 to 194 (GHVDHGKT) coordinates GTP. Residues 212 to 216 (GITQH) form a G2 region. GTP is bound by residues 234-237 (DTPG) and 288-291 (NKCD). The G3 stretch occupies residues 234-237 (DTPG). The tract at residues 288–291 (NKCD) is G4. A G5 region spans residues 324–326 (SAL). Residue T688 is modified to Phosphothreonine.

This sequence belongs to the TRAFAC class translation factor GTPase superfamily. Classic translation factor GTPase family. IF-2 subfamily. As to quaternary structure, monomer. As to expression, expressed in all tissues examined. Highest level in skeletal muscle.

The protein resides in the mitochondrion. Functionally, one of the essential components for the initiation of protein synthesis. Protects formylmethionyl-tRNA from spontaneous hydrolysis and promotes its binding to the 30S ribosomal subunits. Also involved in the hydrolysis of GTP during the formation of the 70S ribosomal complex. The protein is Translation initiation factor IF-2, mitochondrial (MTIF2) of Homo sapiens (Human).